A 231-amino-acid polypeptide reads, in one-letter code: Heptaprenylglyceryl phosphate synthase (231 aa).

Lys-12 is a binding site for sn-glycerol 1-phosphate. Mg(2+) contacts are provided by Asp-14 and Thr-40. Sn-glycerol 1-phosphate-binding positions include 159–164, Gly-189, and 209–210; these read YMEYSG and GN.

Belongs to the GGGP/HepGP synthase family. Group I subfamily. Homodimer. The cofactor is Mg(2+).

It catalyses the reaction sn-glycerol 1-phosphate + all-trans-heptaprenyl diphosphate = 3-heptaprenyl-sn-glycero-1-phosphate + diphosphate. Its pathway is membrane lipid metabolism; glycerophospholipid metabolism. In terms of biological role, prenyltransferase that catalyzes in vivo the transfer of the heptaprenyl moiety of heptaprenyl pyrophosphate (HepPP; 35 carbon atoms) to the C3 hydroxyl of sn-glycerol-1-phosphate (G1P), producing heptaprenylglyceryl phosphate (HepGP). This reaction is an ether-bond-formation step in the biosynthesis of archaea-type G1P-based membrane lipids found in Bacillales. This Brevibacillus brevis (strain 47 / JCM 6285 / NBRC 100599) protein is Heptaprenylglyceryl phosphate synthase.